We begin with the raw amino-acid sequence, 556 residues long: Dihydroxy-acid dehydratase (556 aa).

C47 lines the [2Fe-2S] cluster pocket. D79 contributes to the Mg(2+) binding site. C120 lines the [2Fe-2S] cluster pocket. Mg(2+) is bound by residues D121 and K122. The residue at position 122 (K122) is an N6-carboxylysine. C192 contributes to the [2Fe-2S] cluster binding site. Mg(2+) is bound at residue E444. S470 serves as the catalytic Proton acceptor.

It belongs to the IlvD/Edd family. In terms of assembly, homodimer. It depends on [2Fe-2S] cluster as a cofactor. The cofactor is Mg(2+).

It catalyses the reaction (2R)-2,3-dihydroxy-3-methylbutanoate = 3-methyl-2-oxobutanoate + H2O. The enzyme catalyses (2R,3R)-2,3-dihydroxy-3-methylpentanoate = (S)-3-methyl-2-oxopentanoate + H2O. The protein operates within amino-acid biosynthesis; L-isoleucine biosynthesis; L-isoleucine from 2-oxobutanoate: step 3/4. It participates in amino-acid biosynthesis; L-valine biosynthesis; L-valine from pyruvate: step 3/4. Functions in the biosynthesis of branched-chain amino acids. Catalyzes the dehydration of (2R,3R)-2,3-dihydroxy-3-methylpentanoate (2,3-dihydroxy-3-methylvalerate) into 2-oxo-3-methylpentanoate (2-oxo-3-methylvalerate) and of (2R)-2,3-dihydroxy-3-methylbutanoate (2,3-dihydroxyisovalerate) into 2-oxo-3-methylbutanoate (2-oxoisovalerate), the penultimate precursor to L-isoleucine and L-valine, respectively. In Prochlorococcus marinus (strain MIT 9313), this protein is Dihydroxy-acid dehydratase.